A 129-amino-acid chain; its full sequence is uncharacterized protein (129 aa).

Residues 1–129 (MWLWQDIQCC…HTSNGRTGDL (129 aa)) are disordered. The segment covering 87–100 (KGADTRRLPRETRP) has biased composition (basic and acidic residues). The segment covering 119–129 (PHTSNGRTGDL) has biased composition (polar residues).

This is an uncharacterized protein from Homo sapiens (Human).